We begin with the raw amino-acid sequence, 418 residues long: UDP-N-acetylglucosamine 1-carboxyvinyltransferase 2 (418 aa).

22–23 contacts phosphoenolpyruvate; it reads KN. Arginine 92 lines the UDP-N-acetyl-alpha-D-glucosamine pocket. Cysteine 116 acts as the Proton donor in catalysis. Cysteine 116 bears the 2-(S-cysteinyl)pyruvic acid O-phosphothioketal mark. UDP-N-acetyl-alpha-D-glucosamine-binding residues include aspartate 305 and isoleucine 327.

This sequence belongs to the EPSP synthase family. MurA subfamily.

The protein localises to the cytoplasm. The enzyme catalyses phosphoenolpyruvate + UDP-N-acetyl-alpha-D-glucosamine = UDP-N-acetyl-3-O-(1-carboxyvinyl)-alpha-D-glucosamine + phosphate. Its pathway is cell wall biogenesis; peptidoglycan biosynthesis. In terms of biological role, cell wall formation. Adds enolpyruvyl to UDP-N-acetylglucosamine. This Mesorhizobium japonicum (strain LMG 29417 / CECT 9101 / MAFF 303099) (Mesorhizobium loti (strain MAFF 303099)) protein is UDP-N-acetylglucosamine 1-carboxyvinyltransferase 2.